Here is a 397-residue protein sequence, read N- to C-terminus: Succinate--CoA ligase [ADP-forming] subunit beta (397 aa).

One can recognise an ATP-grasp domain in the interval 9 to 254 (KALLKSFGAP…ETEQDAKELE (246 aa)). Residues lysine 46, 53-55 (GRG), glutamate 109, alanine 112, and glutamate 117 each bind ATP. Residues asparagine 209 and aspartate 223 each coordinate Mg(2+). Residues asparagine 274 and 331 to 333 (GIM) each bind substrate.

Belongs to the succinate/malate CoA ligase beta subunit family. As to quaternary structure, heterotetramer of two alpha and two beta subunits. It depends on Mg(2+) as a cofactor.

The catalysed reaction is succinate + ATP + CoA = succinyl-CoA + ADP + phosphate. The enzyme catalyses GTP + succinate + CoA = succinyl-CoA + GDP + phosphate. It participates in carbohydrate metabolism; tricarboxylic acid cycle; succinate from succinyl-CoA (ligase route): step 1/1. Its function is as follows. Succinyl-CoA synthetase functions in the citric acid cycle (TCA), coupling the hydrolysis of succinyl-CoA to the synthesis of either ATP or GTP and thus represents the only step of substrate-level phosphorylation in the TCA. The beta subunit provides nucleotide specificity of the enzyme and binds the substrate succinate, while the binding sites for coenzyme A and phosphate are found in the alpha subunit. This chain is Succinate--CoA ligase [ADP-forming] subunit beta, found in Hyphomonas neptunium (strain ATCC 15444).